Here is a 742-residue protein sequence, read N- to C-terminus: Eukaryotic translation initiation factor 3 subunit B (742 aa).

Positions 1–10 are enriched in polar residues; that stretch reads MAPSFDTLSE. The segment at 1 to 20 is disordered; sequence MAPSFDTLSEQDLHEEEEEE. One can recognise an RRM domain in the interval 40 to 126; the sequence is TFVVIDGLPI…HTLAVNKLMD (87 aa). 5 WD repeats span residues 193 to 230, 232 to 290, 304 to 345, 515 to 558, and 573 to 611; these read AHWTQLFVQWSPKGTYLASVHPQGIQLWGGPAFSKLKQ, PHPF…RSFV, QPKK…LLGK, IEKK…EKPE, and VEHYGVTDVDWDPTGRYVVSSASVWTHSMENGWNLHTFA.

Belongs to the eIF-3 subunit B family. In terms of assembly, component of the eukaryotic translation initiation factor 3 (eIF-3) complex.

The protein localises to the cytoplasm. In terms of biological role, RNA-binding component of the eukaryotic translation initiation factor 3 (eIF-3) complex, which is involved in protein synthesis of a specialized repertoire of mRNAs and, together with other initiation factors, stimulates binding of mRNA and methionyl-tRNAi to the 40S ribosome. The eIF-3 complex specifically targets and initiates translation of a subset of mRNAs involved in cell proliferation. The sequence is that of Eukaryotic translation initiation factor 3 subunit B (prt1) from Aspergillus terreus (strain NIH 2624 / FGSC A1156).